A 156-amino-acid chain; its full sequence is Endoribonuclease YbeY (156 aa).

The Zn(2+) site is built by H122, H126, and H132.

The protein belongs to the endoribonuclease YbeY family. Zn(2+) serves as cofactor.

It is found in the cytoplasm. Functionally, single strand-specific metallo-endoribonuclease involved in late-stage 70S ribosome quality control and in maturation of the 3' terminus of the 16S rRNA. The protein is Endoribonuclease YbeY of Geobacillus thermodenitrificans (strain NG80-2).